The following is a 310-amino-acid chain: Eukaryotic translation initiation factor 3 subunit G (310 aa).

Disordered stretches follow at residues 1–32 and 179–229; these read MPTE…PVTK and TGDK…DDNA. Positions 187–196 are enriched in low complexity; the sequence is GAEPEPAQAP. The segment covering 211-229 has biased composition (basic and acidic residues); the sequence is GGSRRGESMQPNRRADDNA. An RRM domain is found at 229-307; the sequence is ATIRVTNLSE…LILNVEWAKP (79 aa).

The protein belongs to the eIF-3 subunit G family. Component of the eukaryotic translation initiation factor 3 (eIF-3) complex, which is composed of 13 subunits: eif3a, eif3b, eif3c, eif3d, eif3e, eif3f, eif3g, eif3h, eif3i, eif3j, eif3k, eif3l and eif3m.

The protein resides in the cytoplasm. Its function is as follows. RNA-binding component of the eukaryotic translation initiation factor 3 (eIF-3) complex, which is involved in protein synthesis of a specialized repertoire of mRNAs and, together with other initiation factors, stimulates binding of mRNA and methionyl-tRNAi to the 40S ribosome. The eIF-3 complex specifically targets and initiates translation of a subset of mRNAs involved in cell proliferation. This subunit can bind 18S rRNA. This chain is Eukaryotic translation initiation factor 3 subunit G (eif3g), found in Xenopus tropicalis (Western clawed frog).